Consider the following 180-residue polypeptide: Early nodulin-16 (180 aa).

The N-terminal stretch at 1–22 is a signal peptide; that stretch reads MASSSPILLMIIFSMWLLISHS. One can recognise a Phytocyanin domain in the interval 25 to 129; it reads TDYLIGDSHN…GLKLAVVVQN (105 aa). Asparagine 67 carries an N-linked (GlcNAc...) asparagine glycan. An intrachain disulfide couples cysteine 83 to cysteine 117. N-linked (GlcNAc...) asparagine glycosylation is present at asparagine 152. The GPI-anchor amidated serine moiety is linked to residue serine 154. Residues 155 to 180 constitute a propeptide, removed in mature form; sequence GNKGGAAGLGFIMWLGVSLVMMMFLI.

It belongs to the early nodulin-like (ENODL) family. In terms of tissue distribution, expressed in developing nodules upon symbiosis with Sinorhizobium meliloti.

It is found in the symbiosome. Its subcellular location is the cell membrane. Its function is as follows. May act as a carbohydrate transporter. In Medicago truncatula (Barrel medic), this protein is Early nodulin-16.